The primary structure comprises 356 residues: UDP-3-O-acylglucosamine N-acyltransferase (356 aa).

Histidine 251 functions as the Proton acceptor in the catalytic mechanism.

Belongs to the transferase hexapeptide repeat family. LpxD subfamily. In terms of assembly, homotrimer.

The catalysed reaction is a UDP-3-O-[(3R)-3-hydroxyacyl]-alpha-D-glucosamine + a (3R)-hydroxyacyl-[ACP] = a UDP-2-N,3-O-bis[(3R)-3-hydroxyacyl]-alpha-D-glucosamine + holo-[ACP] + H(+). The protein operates within bacterial outer membrane biogenesis; LPS lipid A biosynthesis. Its function is as follows. Catalyzes the N-acylation of UDP-3-O-acylglucosamine using 3-hydroxyacyl-ACP as the acyl donor. Is involved in the biosynthesis of lipid A, a phosphorylated glycolipid that anchors the lipopolysaccharide to the outer membrane of the cell. The protein is UDP-3-O-acylglucosamine N-acyltransferase of Ralstonia nicotianae (strain ATCC BAA-1114 / GMI1000) (Ralstonia solanacearum).